Here is a 206-residue protein sequence, read N- to C-terminus: Protein-methionine-sulfoxide reductase heme-binding subunit MsrQ (206 aa).

The next 4 helical transmembrane spans lie at 8–28 (IVWL…WLVW), 82–102 (LWCF…ELGI), 116–136 (PYLT…LTST), and 153–173 (FVYL…KILS).

This sequence belongs to the MsrQ family. Heterodimer of a catalytic subunit (MsrP) and a heme-binding subunit (MsrQ). FMN serves as cofactor. Requires heme b as cofactor.

The protein resides in the cell inner membrane. Its function is as follows. Part of the MsrPQ system that repairs oxidized periplasmic proteins containing methionine sulfoxide residues (Met-O), using respiratory chain electrons. Thus protects these proteins from oxidative-stress damage caused by reactive species of oxygen and chlorine generated by the host defense mechanisms. MsrPQ is essential for the maintenance of envelope integrity under bleach stress, rescuing a wide series of structurally unrelated periplasmic proteins from methionine oxidation. MsrQ provides electrons for reduction to the reductase catalytic subunit MsrP, using the quinone pool of the respiratory chain. The chain is Protein-methionine-sulfoxide reductase heme-binding subunit MsrQ from Citrobacter koseri (strain ATCC BAA-895 / CDC 4225-83 / SGSC4696).